The following is a 306-amino-acid chain: N-acetylmuramic acid 6-phosphate etherase (306 aa).

Positions 59 to 222 constitute an SIS domain; that stretch reads TAQALGRGGR…STGVMVCLGK (164 aa). Glu-87 serves as the catalytic Proton donor. The active site involves Glu-118.

The protein belongs to the GCKR-like family. MurNAc-6-P etherase subfamily. As to quaternary structure, homodimer.

The enzyme catalyses N-acetyl-D-muramate 6-phosphate + H2O = N-acetyl-D-glucosamine 6-phosphate + (R)-lactate. Its pathway is amino-sugar metabolism; N-acetylmuramate degradation. Specifically catalyzes the cleavage of the D-lactyl ether substituent of MurNAc 6-phosphate, producing GlcNAc 6-phosphate and D-lactate. This is N-acetylmuramic acid 6-phosphate etherase from Rippkaea orientalis (strain PCC 8801 / RF-1) (Cyanothece sp. (strain PCC 8801)).